A 356-amino-acid polypeptide reads, in one-letter code: cGAMP-activated phospholipase (356 aa).

A PNPLA domain is found at 15-206; sequence LSLNGGGARG…VANNPSYIGL (192 aa). The GXGXXG motif lies at 19–24; that stretch reads GGGARG. The GXSXG signature appears at 58-62; sequence GTSIG. The active-site Nucleophile is the Ser-60. Asp-193 (proton acceptor) is an active-site residue. The DGA/G signature appears at 193-195; it reads DGG.

Belongs to the patatin family.

It catalyses the reaction a 1,2-diacyl-sn-glycero-3-phosphocholine + H2O = a 2-acyl-sn-glycero-3-phosphocholine + a fatty acid + H(+). The catalysed reaction is 1,2-di-(9Z-octadecenoyl)-sn-glycero-3-phosphoethanolamine + 2 H2O = sn-glycero-3-phosphoethanolamine + 2 (9Z)-octadecenoate + 2 H(+). Its activity is regulated as follows. Phospholipase activity is specifically activated upon 3',3'-cGAMP binding, which is produced by the cognate cyclic nucleotide synthase encoded in the same operon. Functionally, effector phospholipase of a CBASS antiviral system. CBASS (cyclic oligonucleotide-based antiphage signaling system) provides immunity against bacteriophages. The CD-NTase protein (DncV) synthesizes cyclic nucleotides in response to infection; these serve as specific second messenger signals. The signals activate a diverse range of effectors, leading to bacterial cell death and thus abortive phage infection. A type II-A(GA) CBASS system. Its function is as follows. Phospholipase that is activated upon binding to the cyclic dinucleotide (CDN) second messenger 3',3'-cyclic GMP-AMP (cGAMP). Degrades phospholipids in the cell membrane. Protects E.coli against phage infection. When capV and dncV are introduced in E.coli MG1655 there is 1000-fold protection against phage P1; protection against other phage (T2, T4, T5, T6 and lambda-vir) requires the 2 subsequent genes (cap2 and cap3). Upon P1 phage infection the activating molecule is produced between 30 and 40 minutes. Activation leads to bacterial cell lysis and death, which occurs before the phage has finished its replication cycle, thus protecting non-infected bacteria by aborting the phage infection and preventing its propagation. In another paper the capV-dncV-cap2-cap3 operon gives 10(4)-10(5)-fold protection against phages lambda, T2, T4 and T6, about 1000-fold protection against P1 and 10-fold protection against T5. The polypeptide is cGAMP-activated phospholipase (Escherichia coli (strain TW11681)).